Reading from the N-terminus, the 215-residue chain is uncharacterized protein (215 aa).

Belongs to the mimivirus L31/R44 family.

This is an uncharacterized protein from Acanthamoeba polyphaga (Amoeba).